Here is a 151-residue protein sequence, read N- to C-terminus: Large-conductance mechanosensitive channel (151 aa).

The next 2 helical transmembrane spans lie at 12 to 32 and 71 to 91; these read GNIV…ALVT and VLLS…FLVV. The interval 122 to 151 is disordered; the sequence is AQTNGDSPGRHGGRGTPSPTDGPLASTESQ.

Belongs to the MscL family. As to quaternary structure, homopentamer.

It localises to the cell membrane. Its function is as follows. Channel that opens in response to stretch forces in the membrane lipid bilayer. May participate in the regulation of osmotic pressure changes within the cell. This is Large-conductance mechanosensitive channel from Mycobacterium bovis (strain BCG / Pasteur 1173P2).